Here is a 106-residue protein sequence, read N- to C-terminus: uncharacterized protein (106 aa).

Residues 78 to 98 (LAITGYVVSIPIVLPILIIFI) traverse the membrane as a helical segment.

Its subcellular location is the membrane. This is an uncharacterized protein from Haemophilus influenzae (strain ATCC 51907 / DSM 11121 / KW20 / Rd).